Reading from the N-terminus, the 695-residue chain is Elongation factor G (695 aa).

A tr-type G domain is found at 8-282; sequence EKTRNIGIMA…AVLDYLPAPT (275 aa). Residues 17-24, 81-85, and 135-138 contribute to the GTP site; these read AHIDAGKT, DTPGH, and NKMD.

Belongs to the TRAFAC class translation factor GTPase superfamily. Classic translation factor GTPase family. EF-G/EF-2 subfamily.

It is found in the cytoplasm. Functionally, catalyzes the GTP-dependent ribosomal translocation step during translation elongation. During this step, the ribosome changes from the pre-translocational (PRE) to the post-translocational (POST) state as the newly formed A-site-bound peptidyl-tRNA and P-site-bound deacylated tRNA move to the P and E sites, respectively. Catalyzes the coordinated movement of the two tRNA molecules, the mRNA and conformational changes in the ribosome. The protein is Elongation factor G of Listeria monocytogenes serotype 4b (strain CLIP80459).